We begin with the raw amino-acid sequence, 602 residues long: Elongation factor 4 (602 aa).

The tr-type G domain occupies 7-189; the sequence is RNIRNFSIIA…AIVQRIPAPQ (183 aa). GTP-binding positions include 19-24 and 136-139; these read DHGKST and NKID.

This sequence belongs to the TRAFAC class translation factor GTPase superfamily. Classic translation factor GTPase family. LepA subfamily.

It is found in the cell inner membrane. It catalyses the reaction GTP + H2O = GDP + phosphate + H(+). Required for accurate and efficient protein synthesis under certain stress conditions. May act as a fidelity factor of the translation reaction, by catalyzing a one-codon backward translocation of tRNAs on improperly translocated ribosomes. Back-translocation proceeds from a post-translocation (POST) complex to a pre-translocation (PRE) complex, thus giving elongation factor G a second chance to translocate the tRNAs correctly. Binds to ribosomes in a GTP-dependent manner. This chain is Elongation factor 4, found in Xylella fastidiosa (strain 9a5c).